The sequence spans 159 residues: Phosphodiesterase delta-like protein (159 aa).

It belongs to the PDE6D/unc-119 family.

This chain is Phosphodiesterase delta-like protein (pdl-1), found in Caenorhabditis elegans.